The primary structure comprises 652 residues: Na(+)/H(+) antiporter NhaA 3 (652 aa).

Residues 1–428 (MTGEIPRGRR…GASLTTWLVF (428 aa)) are na(+)/H(+) antiporter NhaA. 11 helical membrane passes run 32-52 (ETGS…WVNL), 78-98 (LRFW…GLEV), 114-134 (MLPL…YLAF), 142-162 (VGWG…LAVL), 173-193 (FLLT…AIAY), 200-220 (MALF…AAGV), 227-249 (LLLG…VVGL), 306-326 (HPWA…GVVV), 342-362 (GVLF…SMLV), 376-396 (WAAI…ALLI), and 411-431 (VGIL…FRLA). One can recognise a Thioredoxin domain in the interval 429–623 (RLAARLAPAR…LSAAVMSAFA (195 aa)). Positions 626 to 652 (RLRPEGGREPDHRSEAGSEQPDEEPGT) are disordered. Positions 627–641 (LRPEGGREPDHRSEA) are enriched in basic and acidic residues.

In the N-terminal section; belongs to the NhaA Na(+)/H(+) (TC 2.A.33) antiporter family.

The protein localises to the cell membrane. It carries out the reaction Na(+)(in) + 2 H(+)(out) = Na(+)(out) + 2 H(+)(in). Na(+)/H(+) antiporter that extrudes sodium in exchange for external protons. This Salinispora tropica (strain ATCC BAA-916 / DSM 44818 / JCM 13857 / NBRC 105044 / CNB-440) protein is Na(+)/H(+) antiporter NhaA 3.